Reading from the N-terminus, the 570-residue chain is Sulfite reductase [NADPH] hemoprotein beta-component (570 aa).

[4Fe-4S] cluster contacts are provided by C434, C440, C479, and C483. C483 contacts siroheme.

This sequence belongs to the nitrite and sulfite reductase 4Fe-4S domain family. As to quaternary structure, alpha(8)-beta(8). The alpha component is a flavoprotein, the beta component is a hemoprotein. The cofactor is siroheme. [4Fe-4S] cluster serves as cofactor.

The enzyme catalyses hydrogen sulfide + 3 NADP(+) + 3 H2O = sulfite + 3 NADPH + 4 H(+). The protein operates within sulfur metabolism; hydrogen sulfide biosynthesis; hydrogen sulfide from sulfite (NADPH route): step 1/1. Functionally, component of the sulfite reductase complex that catalyzes the 6-electron reduction of sulfite to sulfide. This is one of several activities required for the biosynthesis of L-cysteine from sulfate. The polypeptide is Sulfite reductase [NADPH] hemoprotein beta-component (Shigella flexneri serotype 5b (strain 8401)).